The sequence spans 248 residues: Pulmonary surfactant-associated protein A (248 aa).

Positions 1–20 are cleaved as a signal peptide; that stretch reads MLLCSLTLTLILLAVSGTKC. One can recognise a Collagen-like domain in the interval 31-100; that stretch reads GVPGIPGSPG…PGERGPPGPP (70 aa). The disordered stretch occupies residues 34–105; sequence GIPGSPGLPG…PPGPPAYPDE (72 aa). Pro residues predominate over residues 54-65; it reads PGPPGPIGPPGG. Residues 84–93 are compositionally biased toward basic and acidic residues; that stretch reads ERGDKGEPGE. The 114-residue stretch at 134–247 folds into the C-type lectin domain; the sequence is VGEKVFSTNG…CLQYRLAICE (114 aa). 2 cysteine pairs are disulfide-bonded: Cys-155–Cys-246 and Cys-224–Cys-238. N-linked (GlcNAc...) asparagine glycosylation occurs at Asn-207. Residues Glu-215, Arg-217, Asn-234, and Asp-235 each coordinate Ca(2+).

It belongs to the SFTPA family. In terms of assembly, oligomeric complex of 6 set of homotrimers.

Its subcellular location is the secreted. It is found in the extracellular space. It localises to the extracellular matrix. The protein resides in the surface film. Functionally, in presence of calcium ions, it binds to surfactant phospholipids and contributes to lower the surface tension at the air-liquid interface in the alveoli of the mammalian lung and is essential for normal respiration. Enhances the expression of MYO18A/SP-R210 on alveolar macrophages. The polypeptide is Pulmonary surfactant-associated protein A (SFTPA1) (Equus caballus (Horse)).